The primary structure comprises 429 residues: Phosphoribosylamine--glycine ligase (429 aa).

The ATP-grasp domain maps to 109–316 (KDFLARHQIP…LVDLCLAACD (208 aa)). 135-196 (LREKGAPIVI…EEFLDGEEAS (62 aa)) lines the ATP pocket. Residues glutamate 286 and asparagine 288 each coordinate Mg(2+).

It belongs to the GARS family. In terms of assembly, monomer. Mg(2+) is required as a cofactor. The cofactor is Mn(2+).

It carries out the reaction 5-phospho-beta-D-ribosylamine + glycine + ATP = N(1)-(5-phospho-beta-D-ribosyl)glycinamide + ADP + phosphate + H(+). It functions in the pathway purine metabolism; IMP biosynthesis via de novo pathway; N(1)-(5-phospho-D-ribosyl)glycinamide from 5-phospho-alpha-D-ribose 1-diphosphate: step 2/2. The chain is Phosphoribosylamine--glycine ligase from Salmonella typhimurium (strain LT2 / SGSC1412 / ATCC 700720).